Consider the following 502-residue polypeptide: Probable glycerol kinase (502 aa).

Thr-11 serves as a coordination point for substrate. Arg-15 provides a ligand contact to ATP. Substrate contacts are provided by Arg-85, Tyr-140, and Asp-246. ATP is bound by residues Thr-268, Gly-313, and 416 to 420; that span reads GMIAN.

The protein belongs to the FGGY kinase family.

It carries out the reaction glycerol + ATP = sn-glycerol 3-phosphate + ADP + H(+). The protein operates within polyol metabolism; glycerol degradation via glycerol kinase pathway; sn-glycerol 3-phosphate from glycerol: step 1/1. This chain is Probable glycerol kinase, found in Caenorhabditis elegans.